Consider the following 686-residue polypeptide: X-linked interleukin-1 receptor accessory protein-like 2 (686 aa).

Positions 1–16 (MKLPLLLALVVCSAVS) are cleaved as a signal peptide. At 17–354 (TNLKMVSKRN…LLRKKDLIYK (338 aa)) the chain is on the extracellular side. One can recognise an Ig-like C2-type 1 domain in the interval 32–132 (IDWSVDLKTY…YCMKVSMSLT (101 aa)). An intrachain disulfide couples Cys-53 to Cys-116. N-linked (GlcNAc...) asparagine glycosylation is found at Asn-63, Asn-120, Asn-136, Asn-211, and Asn-328. Ig-like C2-type domains lie at 141–232 (CYNS…LKVT) and 239–347 (PPKP…VLLR). Cystine bridges form between Cys-162/Cys-214 and Cys-265/Cys-331. A helical transmembrane segment spans residues 355 to 375 (IELAGGLGAIFLLLILLLVVY). The Cytoplasmic segment spans residues 376-686 (KCYNIELMLF…KELSFTSDIW (311 aa)). Residues 400 to 556 (KEYDAYLSYT…KFWKHLVYEM (157 aa)) form the TIR domain. Glu-488 is a catalytic residue.

This sequence belongs to the interleukin-1 receptor family. Detected in fetal brain after day 12.5, in particular in parts of the diencephalon and in the basal plate of the spinal cord. In postnatal brain detected in cerebral cortex, olfactory bulb, in the CA1 region of the hippocampus and in Purkinje cells of the Xth cerebellar lobule.

The protein resides in the membrane. The catalysed reaction is NAD(+) + H2O = ADP-D-ribose + nicotinamide + H(+). In Mus musculus (Mouse), this protein is X-linked interleukin-1 receptor accessory protein-like 2 (Il1rapl2).